The following is a 449-amino-acid chain: 3-phosphoshikimate 1-carboxyvinyltransferase (449 aa).

The interval 1 to 30 (MSHDSSPQPLTAAPGAPLRGRLRPPGDKSI) is disordered. 3-phosphoshikimate-binding residues include Lys28, Ser29, and Arg33. Lys28 is a binding site for phosphoenolpyruvate. Gly101 and Arg129 together coordinate phosphoenolpyruvate. 3-phosphoshikimate contacts are provided by Ser175, Gln177, Asp330, and Lys357. Gln177 contacts phosphoenolpyruvate. Asp330 functions as the Proton acceptor in the catalytic mechanism. Phosphoenolpyruvate-binding residues include Arg361 and Arg405.

Belongs to the EPSP synthase family. Monomer.

It localises to the cytoplasm. The catalysed reaction is 3-phosphoshikimate + phosphoenolpyruvate = 5-O-(1-carboxyvinyl)-3-phosphoshikimate + phosphate. Its pathway is metabolic intermediate biosynthesis; chorismate biosynthesis; chorismate from D-erythrose 4-phosphate and phosphoenolpyruvate: step 6/7. Catalyzes the transfer of the enolpyruvyl moiety of phosphoenolpyruvate (PEP) to the 5-hydroxyl of shikimate-3-phosphate (S3P) to produce enolpyruvyl shikimate-3-phosphate and inorganic phosphate. The chain is 3-phosphoshikimate 1-carboxyvinyltransferase from Methylobacterium radiotolerans (strain ATCC 27329 / DSM 1819 / JCM 2831 / NBRC 15690 / NCIMB 10815 / 0-1).